A 607-amino-acid chain; its full sequence is ATP-dependent RNA helicase dbp9 (607 aa).

A Q motif motif is present at residues 24–52; that stretch reads ATFASLGLDARLLQGIAKQNFQSPTLVQS. One can recognise a Helicase ATP-binding domain in the interval 55–232; the sequence is IPLTLEGRDI…GLFCRNPEVL (178 aa). 68-75 contacts ATP; sequence AKTGSGKT. Positions 180 to 183 match the DEAD box motif; it reads DEAD. The Helicase C-terminal domain occupies 243 to 475; sequence GVSQFVVKCA…EVKPYNFDMK (233 aa). Disordered regions lie at residues 332–380 and 580–607; these read VLGD…GKKD and ARAANKAKGRGKGRKSDPLKTFKAKSRK. Residues 334-352 show a composition bias toward acidic residues; it reads GDEDEPKPEETEEVEADDA. The segment covering 353–368 has biased composition (basic and acidic residues); that stretch reads SGEKEDAKDAKKETKQ. Residues 580–592 are compositionally biased toward basic residues; it reads ARAANKAKGRGKG.

The protein belongs to the DEAD box helicase family. DDX56/DBP9 subfamily.

Its subcellular location is the nucleus. The protein localises to the nucleolus. The enzyme catalyses ATP + H2O = ADP + phosphate + H(+). ATP-binding RNA helicase involved in the biogenesis of 60S ribosomal subunits and is required for the normal formation of 25S and 5.8S rRNAs. This is ATP-dependent RNA helicase dbp9 (dbp9) from Sclerotinia sclerotiorum (strain ATCC 18683 / 1980 / Ss-1) (White mold).